The primary structure comprises 486 residues: Glutamyl-tRNA(Gln) amidotransferase subunit A (486 aa).

Active-site charge relay system residues include Lys76 and Ser151. Catalysis depends on Ser175, which acts as the Acyl-ester intermediate.

Belongs to the amidase family. GatA subfamily. In terms of assembly, heterotrimer of A, B and C subunits.

The enzyme catalyses L-glutamyl-tRNA(Gln) + L-glutamine + ATP + H2O = L-glutaminyl-tRNA(Gln) + L-glutamate + ADP + phosphate + H(+). Its function is as follows. Allows the formation of correctly charged Gln-tRNA(Gln) through the transamidation of misacylated Glu-tRNA(Gln) in organisms which lack glutaminyl-tRNA synthetase. The reaction takes place in the presence of glutamine and ATP through an activated gamma-phospho-Glu-tRNA(Gln). This chain is Glutamyl-tRNA(Gln) amidotransferase subunit A, found in Nitrosomonas europaea (strain ATCC 19718 / CIP 103999 / KCTC 2705 / NBRC 14298).